The primary structure comprises 360 residues: UPF0284 protein APE_2029.1 (360 aa).

It belongs to the UPF0284 family.

This is UPF0284 protein APE_2029.1 from Aeropyrum pernix (strain ATCC 700893 / DSM 11879 / JCM 9820 / NBRC 100138 / K1).